The primary structure comprises 589 residues: Cysteine/serine-rich nuclear protein 1 (589 aa).

Disordered regions lie at residues 1-62 and 309-388; these read MTGL…RDFC and FREL…GVDD. Composition is skewed to low complexity over residues 17–41 and 345–368; these read SSVSSSSSSSGCQSRSCSPSSSVSR and DNSCSSDMTDSSTASSSASGTSEA.

Belongs to the AXUD1 family. In terms of tissue distribution, ubiquitous. Most abundantly expressed in lung, placenta, skeletal muscle, pancreas and leukocyte. Frequently down-regulated in lung, kidney, liver and colon cancers compared with their corresponding normal tissues.

It is found in the nucleus. Functionally, binds to the consensus sequence 5'-AGAGTG-3' and has transcriptional activator activity. May have a tumor-suppressor function. May play a role in apoptosis. This Homo sapiens (Human) protein is Cysteine/serine-rich nuclear protein 1 (CSRNP1).